Here is a 168-residue protein sequence, read N- to C-terminus: uncharacterized protein (168 aa).

Residues Ile-5–Gly-24 form a helical membrane-spanning segment.

It localises to the membrane. This is an uncharacterized protein from Bacillus subtilis (strain 168).